The sequence spans 365 residues: Protein-glutamate methylesterase/protein-glutamine glutaminase (365 aa).

Positions Lys5–Lys122 constitute a Response regulatory domain. Asp56 is modified (4-aspartylphosphate). Over residues Ile146–Ser155 the composition is skewed to basic and acidic residues. Residues Ile146–Leu167 form a disordered region. A compositionally biased stretch (polar residues) spans Thr156 to Leu167. The CheB-type methylesterase domain maps to Ile177 to Ile363. Catalysis depends on residues Ser182, His208, and Asp305.

This sequence belongs to the CheB family. Phosphorylated by CheA. Phosphorylation of the N-terminal regulatory domain activates the methylesterase activity.

Its subcellular location is the cytoplasm. The enzyme catalyses [protein]-L-glutamate 5-O-methyl ester + H2O = L-glutamyl-[protein] + methanol + H(+). It carries out the reaction L-glutaminyl-[protein] + H2O = L-glutamyl-[protein] + NH4(+). Its function is as follows. Involved in chemotaxis. Part of a chemotaxis signal transduction system that modulates chemotaxis in response to various stimuli. Catalyzes the demethylation of specific methylglutamate residues introduced into the chemoreceptors (methyl-accepting chemotaxis proteins or MCP) by CheR. Also mediates the irreversible deamidation of specific glutamine residues to glutamic acid. The chain is Protein-glutamate methylesterase/protein-glutamine glutaminase from Methanococcus maripaludis (strain DSM 14266 / JCM 13030 / NBRC 101832 / S2 / LL).